Here is a 331-residue protein sequence, read N- to C-terminus: Isopenicillin N synthase (331 aa).

Isopenicillin N is bound by residues Arg-87, Tyr-91, Ser-183, and Tyr-189. Residues Arg-87, Tyr-91, Ser-183, Tyr-189, His-214, and Asp-216 each contribute to the N-[(5S)-5-amino-5-carboxypentanoyl]-L-cysteinyl-D-valine site. The 113-residue stretch at 176–288 (KKEDALSSVV…RQSLPFFVNL (113 aa)) folds into the Fe2OG dioxygenase domain. Positions 214, 216, and 270 each coordinate Fe(2+). 2-oxoglutarate is bound at residue Arg-279. An isopenicillin N-binding site is contributed by Ser-281. Ser-281 is a binding site for N-[(5S)-5-amino-5-carboxypentanoyl]-L-cysteinyl-D-valine.

The protein belongs to the iron/ascorbate-dependent oxidoreductase family. Monomer. It depends on Fe(2+) as a cofactor.

Its subcellular location is the cytoplasm. The protein resides in the cytosol. It carries out the reaction N-[(5S)-5-amino-5-carboxypentanoyl]-L-cysteinyl-D-valine + O2 = isopenicillin N + 2 H2O. The protein operates within antibiotic biosynthesis; penicillin G biosynthesis; penicillin G from L-alpha-aminoadipate and L-cysteine and L-valine: step 2/3. Isopenicillin N synthase; part of the gene cluster that mediates the biosynthesis of penicillin, the world's most important antibiotic. IpnA catalyzes the cyclization of the tripeptide N-[(5S)-5-amino-5-carboxypentanoyl]-L-cysteinyl-D-valine (LLD-ACV or ACV) to form isopenicillin N (IPN) that contains the beta-lactam nucleus. The penicillin biosynthesis occurs via 3 enzymatic steps, the first corresponding to the production of the tripeptide N-[(5S)-5-amino-5-carboxypentanoyl]-L-cysteinyl-D-valine (LLD-ACV or ACV) by the NRPS acvA. The tripeptide ACV is then cyclized to isopenicillin N (IPN) by the isopenicillin N synthase ipnA that forms the beta-lactam nucleus. Finally, the alpha-aminoadipyl side chain is exchanged for phenylacetic acid by the isopenicillin N acyltransferase aatA to yield penicillin in the peroxisomal matrix. This chain is Isopenicillin N synthase, found in Penicillium chrysogenum (Penicillium notatum).